The following is a 363-amino-acid chain: MLGMEKYFINEDWSPLKVFINRPDGFRVIEEISYKPATEWKGSIQGKYAVYLLRKRGIDHFTVISEISKILHSKIHYIGIKDTNAITEQIVYTTNVKNIIEKYENDKFLLTFLGYSNSKFNHTGNIFEIEIETDDIKEFEKRVNKLRSIKYLPAYIGYQRFGTKRPITHIIGKMLVLREWQNAIDFLVGYPFESESELVKKARYAYMKGDLKEALELFPKRFRDERIAIKLLLRNENYFNILRNLQTPLIFYIEAYQSYLFNKYLSRIMDPTKIDENLVIKIPTSYDSCDSICREIFREEGLLNINFKIKELKLNVKDLVRKAYTLIRNLTIKDKKITFALDRGIYATIVIREIARTDPRLFT.

The active-site Nucleophile is aspartate 82. The region spanning 151-363 (YLPAYIGYQR…IARTDPRLFT (213 aa)) is the TRUD domain.

The protein belongs to the pseudouridine synthase TruD family.

The catalysed reaction is uridine(13) in tRNA = pseudouridine(13) in tRNA. Functionally, could be responsible for synthesis of pseudouridine from uracil-13 in transfer RNAs. The sequence is that of Probable tRNA pseudouridine synthase D from Sulfurisphaera tokodaii (strain DSM 16993 / JCM 10545 / NBRC 100140 / 7) (Sulfolobus tokodaii).